A 115-amino-acid chain; its full sequence is uncharacterized protein (115 aa).

The 115-residue stretch at 1 to 115 (MGVEISLDPP…ETVIKLSAAE (115 aa)) folds into the MSP domain.

This is an uncharacterized protein from Caenorhabditis elegans.